Consider the following 450-residue polypeptide: GTPase Der (450 aa).

2 EngA-type G domains span residues 3–170 (PTIA…LATG) and 183–356 (LKIA…AECS). Residues 9–16 (GRPNVGKS), 56–60 (DTGGL), 122–125 (NKVD), 189–196 (GRPNAGKS), 236–240 (DTAGV), and 301–304 (NKID) contribute to the GTP site. The KH-like domain occupies 357-441 (LRISTGQLNR…PLNIVFRSTF (85 aa)).

Belongs to the TRAFAC class TrmE-Era-EngA-EngB-Septin-like GTPase superfamily. EngA (Der) GTPase family. In terms of assembly, associates with the 50S ribosomal subunit.

GTPase that plays an essential role in the late steps of ribosome biogenesis. The protein is GTPase Der of Maridesulfovibrio salexigens (strain ATCC 14822 / DSM 2638 / NCIMB 8403 / VKM B-1763) (Desulfovibrio salexigens).